The primary structure comprises 155 residues: Small ribosomal subunit protein uS7cz/uS7cy (155 aa).

It belongs to the universal ribosomal protein uS7 family. As to quaternary structure, part of the 30S ribosomal subunit.

It is found in the plastid. It localises to the chloroplast. Functionally, one of the primary rRNA binding proteins, it binds directly to 16S rRNA where it nucleates assembly of the head domain of the 30S subunit. The polypeptide is Small ribosomal subunit protein uS7cz/uS7cy (rps7-A) (Amborella trichopoda).